Consider the following 873-residue polypeptide: Coatomer subunit gamma-2 (873 aa).

The segment covering 1–11 has biased composition (basic and acidic residues); it reads MIKKFDKKDEE. Positions 1 to 21 are disordered; that stretch reads MIKKFDKKDEESGSGSNPFQN. HEAT repeat units follow at residues 64–101, 283–320, 321–355, 356–392, 394–430, and 467–504; these read TEAT…ISED, RELA…KHPS, AVTA…GSES, SVDR…KYPR, HSAM…ENPE, and PQPS…QNDD.

This sequence belongs to the COPG family. As to quaternary structure, oligomeric complex.

Its subcellular location is the cytoplasm. The protein localises to the golgi apparatus membrane. It localises to the cytoplasmic vesicle. It is found in the COPI-coated vesicle membrane. The coatomer is a cytosolic protein complex that binds to dilysine motifs and reversibly associates with Golgi non-clathrin-coated vesicles, which further mediate biosynthetic protein transport from the ER, via the Golgi up to the trans Golgi network. Coatomer complex is required for budding from Golgi membranes, and is essential for the retrograde Golgi-to-ER transport of dilysine-tagged proteins. The chain is Coatomer subunit gamma-2 (copg2) from Takifugu rubripes (Japanese pufferfish).